Reading from the N-terminus, the 64-residue chain is Large ribosomal subunit protein bL35c (64 aa).

Belongs to the bacterial ribosomal protein bL35 family.

The protein localises to the plastid. It is found in the chloroplast. This is Large ribosomal subunit protein bL35c from Phaeodactylum tricornutum (strain CCAP 1055/1).